The sequence spans 261 residues: Guanine nucleotide exchange factor BopE (261 aa).

A compositionally biased stretch (basic and acidic residues) spans 241-253; the sequence is RRAAQDASRDEKG. Residues 241-261 are disordered; the sequence is RRAAQDASRDEKGAANAADGA.

The protein belongs to the GEF (guanine exchange factor) SopE family. In terms of assembly, monomer. Interacts with human CDC42.

It is found in the secreted. In terms of biological role, activator for both CDC42 and RAC1 by directly interacting with these Rho GTPases and acting as a guanine nucleotide exchange factor (GEF). This activation results in actin cytoskeleton rearrangements and stimulates membrane ruffling, thus promoting bacterial entry into non-phagocytic cells. This chain is Guanine nucleotide exchange factor BopE (bopE), found in Burkholderia thailandensis (strain ATCC 700388 / DSM 13276 / CCUG 48851 / CIP 106301 / E264).